Consider the following 192-residue polypeptide: GTP cyclohydrolase 1 (192 aa).

Zn(2+) contacts are provided by C76, H79, and C148.

The protein belongs to the GTP cyclohydrolase I family. As to quaternary structure, toroid-shaped homodecamer, composed of two pentamers of five dimers.

It carries out the reaction GTP + H2O = 7,8-dihydroneopterin 3'-triphosphate + formate + H(+). It functions in the pathway cofactor biosynthesis; 7,8-dihydroneopterin triphosphate biosynthesis; 7,8-dihydroneopterin triphosphate from GTP: step 1/1. In Carboxydothermus hydrogenoformans (strain ATCC BAA-161 / DSM 6008 / Z-2901), this protein is GTP cyclohydrolase 1.